A 150-amino-acid chain; its full sequence is Large ribosomal subunit protein bL9 (150 aa).

This sequence belongs to the bacterial ribosomal protein bL9 family.

Functionally, binds to the 23S rRNA. The sequence is that of Large ribosomal subunit protein bL9 from Saccharopolyspora erythraea (strain ATCC 11635 / DSM 40517 / JCM 4748 / NBRC 13426 / NCIMB 8594 / NRRL 2338).